We begin with the raw amino-acid sequence, 475 residues long: F-box/kelch-repeat protein At1g22040 (475 aa).

Positions methionine 1–arginine 28 are disordered. Residues cysteine 41–arginine 87 enclose the F-box domain. Kelch repeat units follow at residues glutamate 94–serine 140, glycine 182–lysine 228, lysine 229–alanine 279, proline 306–glutamate 350, and tyrosine 352–glycine 401.

In Arabidopsis thaliana (Mouse-ear cress), this protein is F-box/kelch-repeat protein At1g22040.